The chain runs to 397 residues: Cytoplasmic tRNA 2-thiolation protein 2 (397 aa).

This sequence belongs to the CTU2/NCS2 family.

It localises to the cytoplasm. It participates in tRNA modification; 5-methoxycarbonylmethyl-2-thiouridine-tRNA biosynthesis. In terms of biological role, plays a central role in 2-thiolation of mcm(5)S(2)U at tRNA wobble positions of tRNA(Lys), tRNA(Glu) and tRNA(Gln). May act by forming a heterodimer with NCS6/CTU1 that ligates sulfur from thiocarboxylated URM1 onto the uridine of tRNAs at wobble position. This chain is Cytoplasmic tRNA 2-thiolation protein 2, found in Drosophila grimshawi (Hawaiian fruit fly).